We begin with the raw amino-acid sequence, 355 residues long: Anthranilate phosphoribosyltransferase (355 aa).

5-phospho-alpha-D-ribose 1-diphosphate contacts are provided by residues G102, 105-106 (GD), S110, 112-115 (NIST), 130-138 (KHGNRSVSS), and S142. G102 contacts anthranilate. S114 contacts Mg(2+). N133 is an anthranilate binding site. Position 188 (R188) interacts with anthranilate. Residues D246 and E247 each coordinate Mg(2+).

It belongs to the anthranilate phosphoribosyltransferase family. Homodimer. Mg(2+) serves as cofactor.

It carries out the reaction N-(5-phospho-beta-D-ribosyl)anthranilate + diphosphate = 5-phospho-alpha-D-ribose 1-diphosphate + anthranilate. The protein operates within amino-acid biosynthesis; L-tryptophan biosynthesis; L-tryptophan from chorismate: step 2/5. Functionally, catalyzes the transfer of the phosphoribosyl group of 5-phosphorylribose-1-pyrophosphate (PRPP) to anthranilate to yield N-(5'-phosphoribosyl)-anthranilate (PRA). The chain is Anthranilate phosphoribosyltransferase from Pectobacterium atrosepticum (strain SCRI 1043 / ATCC BAA-672) (Erwinia carotovora subsp. atroseptica).